The primary structure comprises 100 residues: Urease subunit gamma (100 aa).

The protein belongs to the urease gamma subunit family. As to quaternary structure, heterotrimer of UreA (gamma), UreB (beta) and UreC (alpha) subunits. Three heterotrimers associate to form the active enzyme.

The protein localises to the cytoplasm. The catalysed reaction is urea + 2 H2O + H(+) = hydrogencarbonate + 2 NH4(+). It participates in nitrogen metabolism; urea degradation; CO(2) and NH(3) from urea (urease route): step 1/1. This chain is Urease subunit gamma, found in Staphylococcus xylosus.